The following is a 118-amino-acid chain: MDVFLMIRRHKTTIFTDAKESSTVFELKRIVEGILKRPPDEQRLYKDDQLLDDGKTLGECGFTSQTARPQAPATVGLAFRADDTFEALCIEPFSSPPELPDVMKPQDSGSSANEQAVQ.

At Met1 the chain carries N-acetylmethionine. The Ubiquitin-like domain maps to 1-66 (MDVFLMIRRH…LGECGFTSQT (66 aa)). Thr84 is subject to Phosphothreonine. The disordered stretch occupies residues 92–118 (PFSSPPELPDVMKPQDSGSSANEQAVQ). The segment covering 107 to 118 (DSGSSANEQAVQ) has biased composition (polar residues). Phosphoserine occurs at positions 108 and 111.

This sequence belongs to the Elongin B family. Heterotrimer of an A (ELOA, ELOA2 or ELOA3P), ELOB and ELOC subunit. The elongin BC complex interacts with EPOP; leading to recruit the elongin BC complex to Polycomb group (PcG) target genes, thereby restricting excessive activity of the PRC2/EED-EZH2 complex. Component of multiple cullin-RING E3 ubiquitin-protein ligase complexes composed of Elongin BC (ELOB and ELOC), a cullin (either CUL2 or CUL5), a catalytic subunit (either RBX1 or RNF7/RBX2), as well as a substrate adapter protein that can be either ASB2, ASB9, ASB11, KLHDC2, KLHDC3, KLHDC10, APPBP2, FEM1A, FEM1B, FEM1C, LRR1, PCMTD1, SOCS1, SOCS2, SOCS5, SPSB1, SPSB3, ELOA, VHL, WSB1 or RAB40C. As part of the Elongin BC E3 ubiquitin ligase complex; interacts with NRBP1. May also interact with DCUN1D1, DCUN1D2, DCUN1D3 and DCUN1D5. May form oligomers as a KLHDC2/KLHDC3-ELOB-ELOC complex; this interaction is autoinhibitory for the E3 ligase complex as the substrate-binding site of KLHDC2/KLHDC3 is blocked in the oligomer. In terms of assembly, (Microbial infection) Following infection by HIV-1 virus, component of a cullin-5-RING E3 ubiquitin-protein ligase complex (ECS complex) hijacked by the HIV-1 Vif protein. As to quaternary structure, (Microbial infection) Substrate adapter protein can be a viral protein such as HIV Vif. (Microbial infection) Interacts with molluscum contagiosum virus MC132. In terms of assembly, (Microbial infection) Interacts with herpes virus 8 virus protein LANA1.

Its subcellular location is the nucleus. It functions in the pathway protein modification; protein ubiquitination. SIII, also known as elongin, is a general transcription elongation factor that increases the RNA polymerase II transcription elongation past template-encoded arresting sites. Subunit A is transcriptionally active and its transcription activity is strongly enhanced by binding to the dimeric complex of the SIII regulatory subunits B and C (elongin BC complex). In embryonic stem cells, the elongin BC complex is recruited by EPOP to Polycomb group (PcG) target genes in order generate genomic region that display both active and repressive chromatin properties, an important feature of pluripotent stem cells. In terms of biological role, core component of multiple cullin-2 and cullin-5-RING E3 ubiquitin-protein ligase complexes (ECS complexes), which mediate the ubiquitination of target proteins. By binding to BC-box motifs it seems to link target recruitment subunits, like VHL and members of the SOCS box family, to Cullin/RBX1 modules that activate E2 ubiquitination enzymes. Component the von Hippel-Lindau ubiquitination complex CBC(VHL). A number of ECS complexes (containing either KLHDC2, KLHDC3, KLHDC10, APPBP2, FEM1A, FEM1B or FEM1C as substrate-recognition component) are part of the DesCEND (destruction via C-end degrons) pathway, which recognizes a C-degron located at the extreme C terminus of target proteins, leading to their ubiquitination and degradation. The ECS(ASB9) complex mediates ubiquitination and degradation of CKB. As part of a multisubunit ubiquitin ligase complex, polyubiquitinates monoubiquitinated POLR2A. ECS(LRR1) ubiquitinates MCM7 and promotes CMG replisome disassembly by VCP and chromatin extraction during S-phase. As part of the ECS(RAB40C) complex, mediates ANKRD28 ubiquitination and degradation, thereby inhibiting protein phosphatase 6 (PP6) complex activity and focal adhesion assembly during cell migration. Functionally, (Microbial infection) Following infection by HIV-1 virus, component of a cullin-5-RING E3 ubiquitin-protein ligase complex (ECS complex) hijacked by the HIV-1 Vif protein, which catalyzes ubiquitination and degradation of APOBEC3F and APOBEC3G. The complex can also ubiquitinate APOBEC3H to some extent. The polypeptide is Elongin-B (Homo sapiens (Human)).